Here is a 426-residue protein sequence, read N- to C-terminus: MSKSENLYSAARELIPGGVNSPVRAFTGVGGTPLFIEKADGAYLYDVDGKAYIDYVGSWGPMVLGHNHPAIRNAVIEAAERGLSFGAPTEMEVKMAELVTNLVPTMDMVRMVNSGTEATMSAIRLARGFTGRDKIIKFEGCYHGHADCLLVKAGSGALTLGQPNSPGVPADFAKHTLTCTYNDLTSVRAAFEQYPQEIACIIVEPVAGNMNCVPPLPEFLPGLRALCDEFGALLIIDEVMTGFRVALAGAQDYYGVVPDLTCLGKIIGGGMPVGAFGGRRDVMDALAPTGPVYQAGTLSGNPIAMAAGFACLNEVAQPGIHETLDELTTRLAEGLCEAAQEAGIPLVVNHVGGMFGIFFTDAETVTCYQDVMACDVERFKRFFHLMLEEGVYLAPSAFEAGFMSVAHSEEDINNTIDAARRVFAKL.

An N6-(pyridoxal phosphate)lysine modification is found at Lys-265.

It belongs to the class-III pyridoxal-phosphate-dependent aminotransferase family. HemL subfamily. As to quaternary structure, homodimer. Pyridoxal 5'-phosphate is required as a cofactor.

Its subcellular location is the cytoplasm. It carries out the reaction (S)-4-amino-5-oxopentanoate = 5-aminolevulinate. The protein operates within porphyrin-containing compound metabolism; protoporphyrin-IX biosynthesis; 5-aminolevulinate from L-glutamyl-tRNA(Glu): step 2/2. The polypeptide is Glutamate-1-semialdehyde 2,1-aminomutase (Salmonella paratyphi A (strain ATCC 9150 / SARB42)).